The chain runs to 90 residues: Auxin-responsive protein SAUR23 (90 aa).

It belongs to the ARG7 family.

It is found in the cell membrane. Functionally, functions as a positive effector of cell expansion through modulation of auxin transport. This Arabidopsis thaliana (Mouse-ear cress) protein is Auxin-responsive protein SAUR23.